The primary structure comprises 32 residues: Snaclec (32 aa).

As to quaternary structure, dimer; disulfide-linked. As to expression, expressed by the venom gland.

The protein resides in the secreted. Its function is as follows. Interferes with one step of hemostasis (modulation of platelet aggregation, or coagulation cascade, for example). The polypeptide is Snaclec (Bothrops diporus (Chaco lancehead)).